A 243-amino-acid polypeptide reads, in one-letter code: Geranylgeranylglyceryl phosphate synthase (243 aa).

Residues D22 and S51 each coordinate Mg(2+). Sn-glycerol 1-phosphate is bound by residues 170–176 (YLESGSG), 201–202 (GG), and 223–224 (GT).

It belongs to the GGGP/HepGP synthase family. Group II subfamily. The cofactor is Mg(2+).

The protein localises to the cytoplasm. The catalysed reaction is sn-glycerol 1-phosphate + (2E,6E,10E)-geranylgeranyl diphosphate = sn-3-O-(geranylgeranyl)glycerol 1-phosphate + diphosphate. The protein operates within membrane lipid metabolism; glycerophospholipid metabolism. Prenyltransferase that catalyzes the transfer of the geranylgeranyl moiety of geranylgeranyl diphosphate (GGPP) to the C3 hydroxyl of sn-glycerol-1-phosphate (G1P). This reaction is the first ether-bond-formation step in the biosynthesis of archaeal membrane lipids. In Picrophilus torridus (strain ATCC 700027 / DSM 9790 / JCM 10055 / NBRC 100828 / KAW 2/3), this protein is Geranylgeranylglyceryl phosphate synthase.